The sequence spans 199 residues: VAMP-like protein YKT61 (199 aa).

The Longin domain occupies 7–133; the sequence is LVLKCAPEAS…LTEALNKFQD (127 aa). In terms of domain architecture, v-SNARE coiled-coil homology spans 139 to 199; it reads KLLKIQRELD…KKTNSCCTIL (61 aa). The S-palmitoyl cysteine moiety is linked to residue cysteine 195. The residue at position 196 (cysteine 196) is a Cysteine methyl ester. Cysteine 196 is lipidated: S-geranylgeranyl cysteine. A propeptide spans 197–199 (removed in mature form); the sequence is TIL.

Belongs to the synaptobrevin family. In terms of assembly, interacts with SYP41. Core constituent of the SNARE complex required for membrane fusion at the trans-Golgi network. In terms of tissue distribution, expressed ubiquitously in roots, stems, flowers and leaves.

Its subcellular location is the cell membrane. Its function is as follows. May be involved in the secretory pathway. Essential for membrane fusion mediated by either SYP41 or SYP61; triggers the fusion of phospholipid vesicles containing SYP41 or SYP61 and VTI12. The polypeptide is VAMP-like protein YKT61 (Arabidopsis thaliana (Mouse-ear cress)).